Consider the following 393-residue polypeptide: MELGKSMENQTDVMVLLAKHVIPTVANGSNLVFSPMSINVLLCLIAAGSNCVTKEQILSFIMLPSSDYLNAVLAKTVSVALNDGMERSDLHLSTAYGVWIDKSLSFKPSFKDLLENSYNATCNQVDFATKPAEVINEVNAWAEVHTNGLIKEILSDDSIKTIRESMLILANAVYFKGAWSKKFDAKLTKSYDFHLLDGTMVKVPFMTNYKKQYLEYYDGFKVLRLPYVEDQRQFAMYIYLPNDRDGLPTLLEEISSKPRFLDNHIPRQRILTEAFKIPKFKFSFEFKASDVLKEMGLTLPFTHGSLTEMVESPSIPENLCVAENLFVSNVFHKACIEVDEEGTEAAAVSVASMTKDMLLMGDFVADHPFLFTVREEKSGVILFMGQVLDPSIH.

The segment at 342-366 is RCL; the sequence is GTEAAAVSVASMTKDMLLMGDFVAD.

The protein belongs to the serpin family.

Its function is as follows. Probable serine protease inhibitor. The chain is Serpin-Z4 from Arabidopsis thaliana (Mouse-ear cress).